The primary structure comprises 544 residues: Chaperonin GroEL (544 aa).

Residues 29 to 32 (TLGP), Lys50, 86 to 90 (DGTTT), Gly414, 477 to 479 (DAA), and Asp493 each bind ATP.

It belongs to the chaperonin (HSP60) family. Forms a cylinder of 14 subunits composed of two heptameric rings stacked back-to-back. Interacts with the co-chaperonin GroES.

It localises to the cytoplasm. The catalysed reaction is ATP + H2O + a folded polypeptide = ADP + phosphate + an unfolded polypeptide.. Together with its co-chaperonin GroES, plays an essential role in assisting protein folding. The GroEL-GroES system forms a nano-cage that allows encapsulation of the non-native substrate proteins and provides a physical environment optimized to promote and accelerate protein folding. The protein is Chaperonin GroEL of Hydrogenovibrio crunogenus (strain DSM 25203 / XCL-2) (Thiomicrospira crunogena).